The sequence spans 372 residues: Putative 8-amino-7-oxononanoate synthase (372 aa).

Arg-20 contacts substrate. 94-95 is a binding site for pyridoxal 5'-phosphate; sequence GY. His-119 serves as a coordination point for substrate. Residues Ser-167, 192 to 195, and 223 to 226 each bind pyridoxal 5'-phosphate; these read DDAH and TLSK. Residue Lys-226 is modified to N6-(pyridoxal phosphate)lysine. Thr-337 contributes to the substrate binding site.

It belongs to the class-II pyridoxal-phosphate-dependent aminotransferase family. BioF subfamily. Homodimer. Requires pyridoxal 5'-phosphate as cofactor.

It catalyses the reaction 6-carboxyhexanoyl-[ACP] + L-alanine + H(+) = (8S)-8-amino-7-oxononanoate + holo-[ACP] + CO2. Its pathway is cofactor biosynthesis; biotin biosynthesis. In terms of biological role, catalyzes the decarboxylative condensation of pimeloyl-[acyl-carrier protein] and L-alanine to produce 8-amino-7-oxononanoate (AON), [acyl-carrier protein], and carbon dioxide. This Methanocaldococcus jannaschii (strain ATCC 43067 / DSM 2661 / JAL-1 / JCM 10045 / NBRC 100440) (Methanococcus jannaschii) protein is Putative 8-amino-7-oxononanoate synthase (bioF).